The following is a 726-amino-acid chain: Catalase-peroxidase (726 aa).

The tryptophyl-tyrosyl-methioninium (Trp-Tyr) (with M-250) cross-link spans tryptophan 96–tyrosine 224. Catalysis depends on histidine 97, which acts as the Proton acceptor. Residues tyrosine 224–methionine 250 constitute a cross-link (tryptophyl-tyrosyl-methioninium (Tyr-Met) (with W-96)). Histidine 265 serves as a coordination point for heme b.

This sequence belongs to the peroxidase family. Peroxidase/catalase subfamily. As to quaternary structure, homodimer or homotetramer. Requires heme b as cofactor. Post-translationally, formation of the three residue Trp-Tyr-Met cross-link is important for the catalase, but not the peroxidase activity of the enzyme.

It catalyses the reaction H2O2 + AH2 = A + 2 H2O. It carries out the reaction 2 H2O2 = O2 + 2 H2O. Its function is as follows. Bifunctional enzyme with both catalase and broad-spectrum peroxidase activity. This is Catalase-peroxidase from Vibrio campbellii (strain ATCC BAA-1116).